A 322-amino-acid polypeptide reads, in one-letter code: Malate dehydrogenase (322 aa).

NAD(+)-binding positions include 10–15 (GSGQIG) and Asp-34. Residues Arg-83 and Arg-89 each coordinate substrate. NAD(+) contacts are provided by residues Asn-96 and 119 to 121 (ITN). Residues Asn-121 and Arg-152 each coordinate substrate. His-176 (proton acceptor) is an active-site residue.

This sequence belongs to the LDH/MDH superfamily. MDH type 3 family.

The catalysed reaction is (S)-malate + NAD(+) = oxaloacetate + NADH + H(+). Functionally, catalyzes the reversible oxidation of malate to oxaloacetate. This chain is Malate dehydrogenase, found in Rhodopseudomonas palustris (strain HaA2).